The sequence spans 265 residues: L-histidine 2-aminobutanoyltransferase (265 aa).

Belongs to the methyltransferase superfamily. CntL family.

The enzyme catalyses L-histidine + S-adenosyl-L-methionine = (2S)-2-amino-4-{[(1S)-1-carboxy-2-(1H-imidazol-4-yl)ethyl]amino}butanoate + S-methyl-5'-thioadenosine + H(+). Functionally, catalyzes the nucleophilic attack of one alpha-aminobutanoate moiety from SAM onto L-histidine to produce the intermediate (2S)-2-amino-4-{[(1S)-1-carboxy-2-(1H-imidazol-4-yl)ethyl]amino}butanoate. Functions in the biosynthesis of the metallophore yersinopine, which is involved in metal acquisition and thus enables bacterial growth inside the host, where metal access is limited. Therefore, this enzyme probably contributes to Yersinia virulence. The sequence is that of L-histidine 2-aminobutanoyltransferase from Yersinia pestis.